An 89-amino-acid polypeptide reads, in one-letter code: Small ribosomal subunit protein uS15 (89 aa).

A disordered region spans residues 1 to 23 (MSLDTTEKQQLINANQTHGTDTG). The span at 8–23 (KQQLINANQTHGTDTG) shows a compositional bias: polar residues.

This sequence belongs to the universal ribosomal protein uS15 family. As to quaternary structure, part of the 30S ribosomal subunit. Forms a bridge to the 50S subunit in the 70S ribosome, contacting the 23S rRNA.

In terms of biological role, one of the primary rRNA binding proteins, it binds directly to 16S rRNA where it helps nucleate assembly of the platform of the 30S subunit by binding and bridging several RNA helices of the 16S rRNA. Its function is as follows. Forms an intersubunit bridge (bridge B4) with the 23S rRNA of the 50S subunit in the ribosome. This chain is Small ribosomal subunit protein uS15, found in Prochlorococcus marinus (strain MIT 9313).